The sequence spans 296 residues: GTPase Era (296 aa).

The Era-type G domain occupies 3-170; the sequence is KSGFVTIVGR…KELMFKYIPE (168 aa). The tract at residues 11–18 is G1; the sequence is GRPNVGKS. Residue 11-18 coordinates GTP; that stretch reads GRPNVGKS. The segment at 37–41 is G2; the sequence is QTTRN. Positions 58-61 are G3; the sequence is DTPG. GTP is bound by residues 58 to 62 and 120 to 123; these read DTPGI and NKID. The G4 stretch occupies residues 120 to 123; it reads NKID. Residues 149-151 form a G5 region; that stretch reads ISA. One can recognise a KH type-2 domain in the interval 201–278; that stretch reads LSEEVPHGIA…YIRLWVKVKE (78 aa).

The protein belongs to the TRAFAC class TrmE-Era-EngA-EngB-Septin-like GTPase superfamily. Era GTPase family. Monomer.

Its subcellular location is the cytoplasm. It is found in the cell membrane. Its function is as follows. An essential GTPase that binds both GDP and GTP, with rapid nucleotide exchange. Plays a role in 16S rRNA processing and 30S ribosomal subunit biogenesis and possibly also in cell cycle regulation and energy metabolism. The chain is GTPase Era from Clostridium botulinum (strain 657 / Type Ba4).